The primary structure comprises 208 residues: 3-isopropylmalate dehydratase small subunit (208 aa).

Belongs to the LeuD family. LeuD type 1 subfamily. In terms of assembly, heterodimer of LeuC and LeuD.

It carries out the reaction (2R,3S)-3-isopropylmalate = (2S)-2-isopropylmalate. The protein operates within amino-acid biosynthesis; L-leucine biosynthesis; L-leucine from 3-methyl-2-oxobutanoate: step 2/4. Functionally, catalyzes the isomerization between 2-isopropylmalate and 3-isopropylmalate, via the formation of 2-isopropylmaleate. In Cupriavidus necator (Alcaligenes eutrophus), this protein is 3-isopropylmalate dehydratase small subunit (leuD).